The primary structure comprises 490 residues: Nicotinate phosphoribosyltransferase (490 aa).

Position 206 is a phosphohistidine (histidine 206).

Belongs to the NAPRTase family. Transiently phosphorylated on a His residue during the reaction cycle. Phosphorylation strongly increases the affinity for substrates and increases the rate of nicotinate D-ribonucleotide production. Dephosphorylation regenerates the low-affinity form of the enzyme, leading to product release.

The catalysed reaction is nicotinate + 5-phospho-alpha-D-ribose 1-diphosphate + ATP + H2O = nicotinate beta-D-ribonucleotide + ADP + phosphate + diphosphate. It participates in cofactor biosynthesis; NAD(+) biosynthesis; nicotinate D-ribonucleotide from nicotinate: step 1/1. Its function is as follows. Catalyzes the synthesis of beta-nicotinate D-ribonucleotide from nicotinate and 5-phospho-D-ribose 1-phosphate at the expense of ATP. The protein is Nicotinate phosphoribosyltransferase (pncB) of Bacillus subtilis (strain 168).